The sequence spans 513 residues: ATP synthase subunit alpha (513 aa).

169 to 176 (GDRKTGKS) contributes to the ATP binding site.

The protein belongs to the ATPase alpha/beta chains family. As to quaternary structure, F-type ATPases have 2 components, CF(1) - the catalytic core - and CF(0) - the membrane proton channel. CF(1) has five subunits: alpha(3), beta(3), gamma(1), delta(1), epsilon(1). CF(0) has three main subunits: a(1), b(2) and c(9-12). The alpha and beta chains form an alternating ring which encloses part of the gamma chain. CF(1) is attached to CF(0) by a central stalk formed by the gamma and epsilon chains, while a peripheral stalk is formed by the delta and b chains.

It is found in the cell membrane. It carries out the reaction ATP + H2O + 4 H(+)(in) = ADP + phosphate + 5 H(+)(out). In terms of biological role, produces ATP from ADP in the presence of a proton gradient across the membrane. The alpha chain is a regulatory subunit. The sequence is that of ATP synthase subunit alpha from Levilactobacillus brevis (strain ATCC 367 / BCRC 12310 / CIP 105137 / JCM 1170 / LMG 11437 / NCIMB 947 / NCTC 947) (Lactobacillus brevis).